The chain runs to 598 residues: Elongation factor 4 (598 aa).

A tr-type G domain is found at 2–184; it reads KNIRNFSIIA…EIVAKIPAPE (183 aa). GTP contacts are provided by residues 14 to 19 and 131 to 134; these read DHGKST and NKID.

It belongs to the TRAFAC class translation factor GTPase superfamily. Classic translation factor GTPase family. LepA subfamily.

Its subcellular location is the cell inner membrane. The catalysed reaction is GTP + H2O = GDP + phosphate + H(+). Functionally, required for accurate and efficient protein synthesis under certain stress conditions. May act as a fidelity factor of the translation reaction, by catalyzing a one-codon backward translocation of tRNAs on improperly translocated ribosomes. Back-translocation proceeds from a post-translocation (POST) complex to a pre-translocation (PRE) complex, thus giving elongation factor G a second chance to translocate the tRNAs correctly. Binds to ribosomes in a GTP-dependent manner. The protein is Elongation factor 4 of Haemophilus influenzae (strain ATCC 51907 / DSM 11121 / KW20 / Rd).